The following is a 136-amino-acid chain: Protein LpdD (136 aa).

This sequence belongs to the CinA family.

In terms of biological role, probably involved in tannin degradation, however the precise biochemical function in metabolism of gallate is unknown. In Lactiplantibacillus plantarum (strain ATCC BAA-793 / NCIMB 8826 / WCFS1) (Lactobacillus plantarum), this protein is Protein LpdD.